Reading from the N-terminus, the 677-residue chain is Methionine--tRNA ligase (677 aa).

Positions 15 to 25 (PYANGSIHLGH) match the 'HIGH' region motif. Zn(2+) is bound by residues Cys-146, Cys-149, Cys-159, and Cys-162. The short motif at 333–337 (KMSKS) is the 'KMSKS' region element. Lys-336 contacts ATP. The tRNA-binding domain occupies 575-677 (DFAKVDLRVA…AGAKPGHQVK (103 aa)).

Belongs to the class-I aminoacyl-tRNA synthetase family. MetG type 1 subfamily. In terms of assembly, homodimer. It depends on Zn(2+) as a cofactor.

The protein resides in the cytoplasm. It carries out the reaction tRNA(Met) + L-methionine + ATP = L-methionyl-tRNA(Met) + AMP + diphosphate. Its function is as follows. Is required not only for elongation of protein synthesis but also for the initiation of all mRNA translation through initiator tRNA(fMet) aminoacylation. In Escherichia fergusonii (strain ATCC 35469 / DSM 13698 / CCUG 18766 / IAM 14443 / JCM 21226 / LMG 7866 / NBRC 102419 / NCTC 12128 / CDC 0568-73), this protein is Methionine--tRNA ligase.